The primary structure comprises 199 residues: DnaJ homolog subfamily C member 5B (199 aa).

A phosphoserine mark is found at S14 and S16. Residues 19–84 (ALYEILGLHK…SKRNIYDKYG (66 aa)) form the J domain.

As to quaternary structure, interacts with the chaperone complex consisting of HSC70 and SGTA. Palmitoylated.

The protein localises to the membrane. The protein is DnaJ homolog subfamily C member 5B (DNAJC5B) of Bos taurus (Bovine).